A 30-amino-acid polypeptide reads, in one-letter code: SDDPKESEGDLHCVCVKTTRLVRPGHITXL.

This sequence belongs to the intercrine alpha (chemokine CxC) family. In terms of assembly, homotetramer. Interacts with TNFAIP6 (via Link domain). Interacts with CCR1. Interacts with CXCR3. In terms of processing, binds non-covalently to a proteoglycan molecule.

The protein resides in the secreted. Its function is as follows. Chemokine released during platelet aggregation that plays a role in different biological processes including hematopoiesis, cell proliferation, differentiation, and activation. Acts via different functional receptors including CCR1, CXCR3A or CXCR3B. Upon interaction with CXCR3A receptor, induces activated T-lymphocytes migration mediated via downstream Ras/extracellular signal-regulated kinase (ERK) signaling. Neutralizes the anticoagulant effect of heparin by binding more strongly to heparin than to the chondroitin-4-sulfate chains of the carrier molecule. Plays a role in the inhibition of hematopoiesis and in the maintenance of hematopoietic stem cell (HSC) quiescence. Chemotactic for neutrophils and monocytes via CCR1. Inhibits endothelial cell proliferation. In cooperation with toll-like receptor 8/TLR8, induces chromatin remodeling and activates inflammatory gene expression via the TBK1-IRF5 axis. In addition, induces myofibroblast differentiation and collagen synthesis in different precursor cells, including endothelial cells, by stimulating endothelial-to-mesenchymal transition. The sequence is that of Platelet factor 4 (PF4) from Oryctolagus cuniculus (Rabbit).